A 318-amino-acid chain; its full sequence is Nodulation protein D (318 aa).

Positions 6 to 63 constitute an HTH lysR-type domain; sequence LDLNLLVALDALMTERKLTAAARSINLSQPAMSAAIGRLRAYFNDELFLMQQRRLVPT. Positions 23–42 form a DNA-binding region, H-T-H motif; it reads LTAAARSINLSQPAMSAAIG.

Belongs to the LysR transcriptional regulatory family.

Its function is as follows. NodD regulates the expression of the nodABCFE genes which encode other nodulation proteins. NodD is also a negative regulator of its own expression. Binds flavonoids as inducers. The polypeptide is Nodulation protein D (nodD) (Rhizobium leguminosarum bv. trifolii).